The chain runs to 237 residues: Ubiquinone biosynthesis O-methyltransferase (237 aa).

Arg-38, Gly-58, Asp-79, and Met-124 together coordinate S-adenosyl-L-methionine.

The protein belongs to the methyltransferase superfamily. UbiG/COQ3 family.

The catalysed reaction is a 3-demethylubiquinol + S-adenosyl-L-methionine = a ubiquinol + S-adenosyl-L-homocysteine + H(+). It catalyses the reaction a 3-(all-trans-polyprenyl)benzene-1,2-diol + S-adenosyl-L-methionine = a 2-methoxy-6-(all-trans-polyprenyl)phenol + S-adenosyl-L-homocysteine + H(+). Its pathway is cofactor biosynthesis; ubiquinone biosynthesis. O-methyltransferase that catalyzes the 2 O-methylation steps in the ubiquinone biosynthetic pathway. This Acinetobacter baumannii (strain ACICU) protein is Ubiquinone biosynthesis O-methyltransferase.